The chain runs to 480 residues: Alpha-glucosidase (480 aa).

Position 4–70 (4–70 (VKIGIIGAGS…ADLKFEKTTS (67 aa))) interacts with NAD(+). Substrate is bound by residues Asp119 and Asn153. Cys174 lines the Mn(2+) pocket. Residue His175 is the Proton donor of the active site. Residue His203 coordinates Mn(2+). Residue Asp260 is the Proton acceptor of the active site.

The protein belongs to the glycosyl hydrolase 4 family. In terms of assembly, homodimer. The cofactor is NAD(+). Mn(2+) serves as cofactor.

The catalysed reaction is Hydrolysis of terminal, non-reducing (1-&gt;4)-linked alpha-D-glucose residues with release of alpha-D-glucose.. With respect to regulation, inhibited by EDTA in vitro. Is able to hydrolyze diverse types of alpha-glycoside bonds in di- and trisaccharides: alpha-1,4 bonds of maltose and maltotriose, alpha-1,1 bonds of trehalose, alpha-1,2 bonds of sucrose, alpha-1,3 bonds of turanose and melizitose, alpha-1,6 bonds of isomaltose and melibiose. AglA is not specific with respect to the configuration at the C-4 position of its substrates because it also possesses alpha-galactosidase activity. Acts on the substrate from the non-reducing end of the chain. The activity of AglA drops with increasing length of the saccharide chain. Does not hydrolyze alpha-, beta-, and gamma-cyclodextrins or polysaccharides (starch, pullulan, amylose, amylopectin, glycogen). Does not cleave beta-glycosidic bonds in di-, oligo-, or polysaccharides. The polypeptide is Alpha-glucosidase (aglA) (Thermotoga neapolitana).